Here is a 668-residue protein sequence, read N- to C-terminus: Fructose-1,6-bisphosphatase class 3 (668 aa).

The protein belongs to the FBPase class 3 family. Requires Mn(2+) as cofactor.

It catalyses the reaction beta-D-fructose 1,6-bisphosphate + H2O = beta-D-fructose 6-phosphate + phosphate. It participates in carbohydrate biosynthesis; gluconeogenesis. This chain is Fructose-1,6-bisphosphatase class 3, found in Clostridium botulinum (strain Kyoto / Type A2).